The chain runs to 249 residues: Metallo-beta-lactamase type 2 (249 aa).

The first 22 residues, Met1–Gly22, serve as a signal peptide directing secretion. 5 residues coordinate Zn(2+): His98, His100, Asp102, His161, and Cys180. Lys183 is a binding site for substrate. His222 is a Zn(2+) binding site.

Belongs to the metallo-beta-lactamase superfamily. Class-B beta-lactamase family. In terms of assembly, monomer. It depends on Zn(2+) as a cofactor.

The protein localises to the periplasm. The enzyme catalyses a beta-lactam + H2O = a substituted beta-amino acid. Its function is as follows. Confers resistance to the different beta-lactams antibiotics (penicillin, cephalosporin and carbapenem) via the hydrolysis of the beta-lactam ring. This is Metallo-beta-lactamase type 2 (blaB2) from Elizabethkingia meningoseptica (Chryseobacterium meningosepticum).